Here is a 706-residue protein sequence, read N- to C-terminus: Zinc transporter foi (706 aa).

An N-terminal signal peptide occupies residues 1-21 (MARHIMAVCVVCLLCAHRLHC). The Extracellular portion of the chain corresponds to 22–261 (QDHIESLLGP…EKDKDIFYVW (240 aa)). The span at 40 to 56 (QDQLNARVYTNLSPSSE) shows a compositional bias: polar residues. The disordered stretch occupies residues 40–101 (QDQLNARVYT…HGPTSESRVP (62 aa)). 6 N-linked (GlcNAc...) asparagine glycosylation sites follow: Asn-74, Asn-119, Asn-176, Asn-182, Asn-196, and Asn-207. Residues 262–282 (IYAFISVFACGILGLVGVAII) traverse the membrane as a helical segment. Residues 283-292 (PFMGSRYYKY) are Cytoplasmic-facing. The helical transmembrane segment at 293–313 (IIQYLVALAVGTMTGDALLHL) threads the bilayer. The Extracellular segment spans residues 314–329 (LPHSLAGQDERGMIMK). Residues 330–350 (GLGCLGGIIFFYVMEHALTMI) traverse the membrane as a helical segment. At 351–604 (SEWRKSVEKK…LIKAGMSVKS (254 aa)) the chain is on the cytoplasmic side. Phosphoserine is present on residues Ser-376, Ser-377, and Ser-381. Residues 605–625 (AVYYNLLTGVLSFIGMIFGIA) traverse the membrane as a helical segment. Over 626–631 (FGQSQD) the chain is Extracellular. The chain crosses the membrane as a helical span at residues 632–652 (VAQWMFAVAAGLFIYIALVDM). The Cytoplasmic segment spans residues 653-665 (MPEISASHKSLGQ). Residues 666 to 686 (FLLQILGMLSGVGIMLLIALY) form a helical membrane-spanning segment. Residues 687–706 (EGDLMSAFGTAGAASHQHAH) lie on the Extracellular side of the membrane.

Belongs to the ZIP transporter (TC 2.A.5) family. In terms of processing, glycosylated. In terms of tissue distribution, maternal foi has almost completely disappeared by embryonic stage 3 except in the pole cells. In stage 6 embryos, expression is enriched in the invaginating mesoderm. In stage 9 embryos, high levels in the anterior and posterior midgut primordia. In stage 14 embryos, broad expression with low levels in the epidermis.

The protein resides in the cell membrane. In terms of biological role, required for the normal migration of longitudinal and peripheral glial cells. During larval development, required for the migration of the subretinal glia into the eye disk. During embryonic development, also controls the migration of muscle cells toward their attachment sites. Required in the mesoderm for the correct morphogenesis of embryonic gonad and for tracheal branch fusion during tracheal development. Shg may be cooperating with foi to mediate a common mechanism for gonad and tracheal morphogenesis. Acts as a zinc transporter in both yeast and mammalian cells. In Drosophila melanogaster (Fruit fly), this protein is Zinc transporter foi.